The chain runs to 828 residues: Outer membrane usher protein MrkC (828 aa).

Positions 1–18 (MKQRSICPGRLSTAIAVA) are cleaved as a signal peptide. Cys813 and Cys827 are disulfide-bonded.

This sequence belongs to the fimbrial export usher family.

The protein resides in the cell outer membrane. Its function is as follows. Involved in the export and assembly of the type 3 fimbrial subunit (MrkA). In Klebsiella pneumoniae, this protein is Outer membrane usher protein MrkC (mrkC).